A 140-amino-acid polypeptide reads, in one-letter code: Large ribosomal subunit protein uL16 (140 aa).

This sequence belongs to the universal ribosomal protein uL16 family. In terms of assembly, part of the 50S ribosomal subunit.

Functionally, binds 23S rRNA and is also seen to make contacts with the A and possibly P site tRNAs. In Phytoplasma mali (strain AT), this protein is Large ribosomal subunit protein uL16.